The primary structure comprises 66 residues: Large ribosomal subunit protein bL35 (66 aa).

This sequence belongs to the bacterial ribosomal protein bL35 family.

This is Large ribosomal subunit protein bL35 from Leptospira biflexa serovar Patoc (strain Patoc 1 / Ames).